Here is a 733-residue protein sequence, read N- to C-terminus: 1,4-alpha-glucan branching enzyme GlgB (733 aa).

Residue Asp-412 is the Nucleophile of the active site. The active-site Proton donor is the Glu-467.

The protein belongs to the glycosyl hydrolase 13 family. GlgB subfamily. As to quaternary structure, monomer.

The enzyme catalyses Transfers a segment of a (1-&gt;4)-alpha-D-glucan chain to a primary hydroxy group in a similar glucan chain.. It participates in glycan biosynthesis; glycogen biosynthesis. Catalyzes the formation of the alpha-1,6-glucosidic linkages in glycogen by scission of a 1,4-alpha-linked oligosaccharide from growing alpha-1,4-glucan chains and the subsequent attachment of the oligosaccharide to the alpha-1,6 position. The chain is 1,4-alpha-glucan branching enzyme GlgB from Burkholderia vietnamiensis (strain G4 / LMG 22486) (Burkholderia cepacia (strain R1808)).